Reading from the N-terminus, the 616-residue chain is MITTVLRRSLLDASKRNLSASLTSINTVLFHNLAPAATRVSDLALIGSSDVKAGFPFGVEAKGIHFQSGPLDFRASMVSQAGFAISESSERRVGDSESVGGDGLAISELGISPEIVKALSSKGIEKLFPIQKAVLEPAMEGRDMIGRARTGTGKTLAFGIPIIDKIIKYNAKHGRGRNPLCLVLAPTRELARQVEKEFRESAPSLDTICLYGGTPIGQQMRQLDYGVDVAVGTPGRVIDLMKRGALNLSEVQFVVLDEADQMLQVGFAEDVEIILEKLPEKRQSMMFSATMPSWIRSLTKKYLNNPLTVDLVGDSDQKLADGITTYSIIADSYGRASIIGPLVTEHAKGGKCIVFTQTKRDADRLSYALARSFKCEALHGDISQSQRERTLAGFRDGHFNILVATDVAARGLDVPNVDLIIHYELPNNTETFVHRTGRTGRAGKKGSAILIYSQDQSRAVKIIEREVGSRFTELPSIAVERGSASMFEGIGSRSGGSFGGGMRDRGSSFGGRSGGGGYGGSSGGYGGGRSGGSSNRYSGDSDRSGFGSFGMRSPEGYGSDRSSQSGGRSSFGGGRSGGSSNNRSSGFGDFGSDRSSQSGGRSSFGGFGSNDGKRSY.

A mitochondrion-targeting transit peptide spans 1-81 (MITTVLRRSL…DFRASMVSQA (81 aa)). Residues 104 to 132 (LAISELGISPEIVKALSSKGIEKLFPIQK) carry the Q motif motif. The Helicase ATP-binding domain maps to 135-309 (LEPAMEGRDM…KKYLNNPLTV (175 aa)). An ATP-binding site is contributed by 148–155 (ARTGTGKT). Positions 257 to 260 (DEAD) match the DEAD box motif. Residues 338-482 (IIGPLVTEHA…ELPSIAVERG (145 aa)) form the Helicase C-terminal domain. Positions 489-616 (GIGSRSGGSF…FGSNDGKRSY (128 aa)) are disordered. 2 stretches are compositionally biased toward gly residues: residues 492-501 (SRSGGSFGGG) and 508-531 (SFGGRSGGGGYGGSSGGYGGGRSG). Composition is skewed to low complexity over residues 532–568 (GSSNRYSGDSDRSGFGSFGMRSPEGYGSDRSSQSGGR) and 578–587 (GSSNNRSSGF).

It belongs to the DEAD box helicase family. DDX21/DDX50 subfamily.

The protein resides in the mitochondrion. It carries out the reaction ATP + H2O = ADP + phosphate + H(+). The polypeptide is DEAD-box ATP-dependent RNA helicase 53, mitochondrial (RH53) (Arabidopsis thaliana (Mouse-ear cress)).